Here is a 195-residue protein sequence, read N- to C-terminus: Glycerol-3-phosphate acyltransferase (195 aa).

Transmembrane regions (helical) follow at residues 2-22 (LWIF…GLFI), 52-72 (YGVA…LMAY), 78-98 (WIFI…SIFM), 112-132 (VFLA…LAVI), and 145-165 (FAVA…VPLA).

This sequence belongs to the PlsY family. Probably interacts with PlsX.

The protein resides in the cell inner membrane. The catalysed reaction is an acyl phosphate + sn-glycerol 3-phosphate = a 1-acyl-sn-glycero-3-phosphate + phosphate. It functions in the pathway lipid metabolism; phospholipid metabolism. Functionally, catalyzes the transfer of an acyl group from acyl-phosphate (acyl-PO(4)) to glycerol-3-phosphate (G3P) to form lysophosphatidic acid (LPA). This enzyme utilizes acyl-phosphate as fatty acyl donor, but not acyl-CoA or acyl-ACP. The polypeptide is Glycerol-3-phosphate acyltransferase (Maridesulfovibrio salexigens (strain ATCC 14822 / DSM 2638 / NCIMB 8403 / VKM B-1763) (Desulfovibrio salexigens)).